An 875-amino-acid polypeptide reads, in one-letter code: Valine--tRNA ligase (875 aa).

The 'HIGH' region signature appears at 45 to 55 (PNVTGVLHMGH). Positions 524–528 (KMSKS) match the 'KMSKS' region motif. Lys527 lines the ATP pocket. Residues 803-837 (VKSLIDKTKELIRLEKQLEKYKMLNISVSKKLENE) adopt a coiled-coil conformation.

This sequence belongs to the class-I aminoacyl-tRNA synthetase family. ValS type 1 subfamily. As to quaternary structure, monomer.

The protein localises to the cytoplasm. The catalysed reaction is tRNA(Val) + L-valine + ATP = L-valyl-tRNA(Val) + AMP + diphosphate. Its function is as follows. Catalyzes the attachment of valine to tRNA(Val). As ValRS can inadvertently accommodate and process structurally similar amino acids such as threonine, to avoid such errors, it has a 'posttransfer' editing activity that hydrolyzes mischarged Thr-tRNA(Val) in a tRNA-dependent manner. In Borreliella burgdorferi (strain ATCC 35210 / DSM 4680 / CIP 102532 / B31) (Borrelia burgdorferi), this protein is Valine--tRNA ligase.